The following is a 314-amino-acid chain: tRNA uridine(34) hydroxylase (314 aa).

The 95-residue stretch at 140–234 (SRDDVILVDT…YLEETPAEES (95 aa)) folds into the Rhodanese domain. Cys-194 serves as the catalytic Cysteine persulfide intermediate.

This sequence belongs to the TrhO family.

The catalysed reaction is uridine(34) in tRNA + AH2 + O2 = 5-hydroxyuridine(34) in tRNA + A + H2O. Catalyzes oxygen-dependent 5-hydroxyuridine (ho5U) modification at position 34 in tRNAs. The polypeptide is tRNA uridine(34) hydroxylase (Acinetobacter baylyi (strain ATCC 33305 / BD413 / ADP1)).